A 283-amino-acid polypeptide reads, in one-letter code: Release factor glutamine methyltransferase (283 aa).

S-adenosyl-L-methionine is bound by residues 121–125, D144, and N188; that span reads GTGSG. Substrate is bound at residue 188–191; the sequence is NPPY.

This sequence belongs to the protein N5-glutamine methyltransferase family. PrmC subfamily.

The catalysed reaction is L-glutaminyl-[peptide chain release factor] + S-adenosyl-L-methionine = N(5)-methyl-L-glutaminyl-[peptide chain release factor] + S-adenosyl-L-homocysteine + H(+). In terms of biological role, methylates the class 1 translation termination release factors RF1/PrfA and RF2/PrfB on the glutamine residue of the universally conserved GGQ motif. This chain is Release factor glutamine methyltransferase, found in Bacillus cereus (strain ATCC 14579 / DSM 31 / CCUG 7414 / JCM 2152 / NBRC 15305 / NCIMB 9373 / NCTC 2599 / NRRL B-3711).